The following is a 146-amino-acid chain: Hemoglobin subunit beta (146 aa).

Residues His-2–His-146 form the Globin domain. His-63 and His-92 together coordinate heme b.

This sequence belongs to the globin family. Heterotetramer of two alpha chains and two beta chains. Red blood cells.

Functionally, involved in oxygen transport from the lung to the various peripheral tissues. The sequence is that of Hemoglobin subunit beta (HBB) from Microcephalophis gracilis (Graceful small-headed sea snake).